A 220-amino-acid chain; its full sequence is UPF0758 protein CKO_05095 (220 aa).

An MPN domain is found at 98-220 (ALLSPEMTRE…YVSFAERGWI (123 aa)). 3 residues coordinate Zn(2+): His-169, His-171, and Asp-182. The JAMM motif motif lies at 169–182 (HNHPSGCAEPSKAD).

The protein belongs to the UPF0758 family. YicR subfamily.

This Citrobacter koseri (strain ATCC BAA-895 / CDC 4225-83 / SGSC4696) protein is UPF0758 protein CKO_05095.